The sequence spans 262 residues: Thiazole synthase (262 aa).

The Schiff-base intermediate with DXP role is filled by Lys97. Residues Gly158, 185–186 (AG), and 207–208 (NT) each bind 1-deoxy-D-xylulose 5-phosphate.

It belongs to the ThiG family. As to quaternary structure, homotetramer. Forms heterodimers with either ThiH or ThiS.

Its subcellular location is the cytoplasm. It carries out the reaction [ThiS sulfur-carrier protein]-C-terminal-Gly-aminoethanethioate + 2-iminoacetate + 1-deoxy-D-xylulose 5-phosphate = [ThiS sulfur-carrier protein]-C-terminal Gly-Gly + 2-[(2R,5Z)-2-carboxy-4-methylthiazol-5(2H)-ylidene]ethyl phosphate + 2 H2O + H(+). The protein operates within cofactor biosynthesis; thiamine diphosphate biosynthesis. Its function is as follows. Catalyzes the rearrangement of 1-deoxy-D-xylulose 5-phosphate (DXP) to produce the thiazole phosphate moiety of thiamine. Sulfur is provided by the thiocarboxylate moiety of the carrier protein ThiS. In vitro, sulfur can be provided by H(2)S. The chain is Thiazole synthase from Neisseria gonorrhoeae (strain ATCC 700825 / FA 1090).